The chain runs to 323 residues: Ribosomal protein L11 methyltransferase (323 aa).

S-adenosyl-L-methionine contacts are provided by T160, G184, D206, and N257.

This sequence belongs to the methyltransferase superfamily. PrmA family.

The protein resides in the cytoplasm. It catalyses the reaction L-lysyl-[protein] + 3 S-adenosyl-L-methionine = N(6),N(6),N(6)-trimethyl-L-lysyl-[protein] + 3 S-adenosyl-L-homocysteine + 3 H(+). In terms of biological role, methylates ribosomal protein L11. The sequence is that of Ribosomal protein L11 methyltransferase from Agathobacter rectalis (strain ATCC 33656 / DSM 3377 / JCM 17463 / KCTC 5835 / VPI 0990) (Eubacterium rectale).